The primary structure comprises 795 residues: Oleate activated transcription factor 3 (795 aa).

The segment at residues 14-43 (CSNCKRRKSRCDRGKPACGNCIRLGNRETC) is a DNA-binding region (zn(2)-C6 fungal-type).

Belongs to the OAF3 family.

The protein resides in the cytoplasm. It localises to the nucleus. Its subcellular location is the mitochondrion. Functionally, transcriptional inhibitor with a significantly increased number of target genes in response to oleate. The chain is Oleate activated transcription factor 3 (OAF3) from Eremothecium gossypii (strain ATCC 10895 / CBS 109.51 / FGSC 9923 / NRRL Y-1056) (Yeast).